The primary structure comprises 285 residues: Taffazin (285 aa).

Topologically, residues 1–23 are mitochondrial intermembrane; sequence MDSNNSNNNNKNLKQICDIPKPQ. The stretch at 24–42 is an intramembrane region; sequence FLSKGVFTLVGVLCKFWIS. Residues 43 to 285 lie on the Mitochondrial intermembrane side of the membrane; that stretch reads MNTVTTSGID…GRFSHPTIKD (243 aa). The short motif at 74–79 is the HXXXXD motif element; it reads HSSNLD.

It belongs to the taffazin family.

The protein resides in the mitochondrion outer membrane. The protein localises to the mitochondrion inner membrane. The enzyme catalyses a 1-acyl-sn-glycero-3-phosphate + a 1,2-diacyl-sn-glycero-3-phospho-(1'-sn-glycerol) = 1-acyl-sn-glycero-3-phospho-(1'-sn-glycerol) + a 1,2-diacyl-sn-glycero-3-phosphate. It catalyses the reaction 1-hexadecanoyl-2-(9Z,12Z-octadecadienoyl)-sn-glycero-3-phospho-(1'-sn-glycerol) + 1-(9Z-octadecenoyl)-sn-glycero-3-phosphate = 1-(9Z)-octadecenoyl-2-(9Z,12Z)-octadecadienoyl-sn-glycero-3-phosphate + 1-hexadecanoyl-sn-glycero-3-phospho-(1'-sn-glycerol). The catalysed reaction is 1'-[1,2-diacyl-sn-glycero-3-phospho],3'-[1-acyl-sn-glycero-3-phospho]-glycerol + a 1,2-diacyl-sn-glycero-3-phosphocholine = a cardiolipin + a 1-acyl-sn-glycero-3-phosphocholine. It carries out the reaction 1-hexadecanoyl-2-(9Z,12Z-octadecadienoyl)-sn-glycero-3-phosphocholine + 1-hexadecanoyl-sn-glycero-3-phosphocholine = 2-(9Z,12Z-octadecadienoyl)-sn-glycero-3-phosphocholine + 1,2-dihexadecanoyl-sn-glycero-3-phosphocholine. The enzyme catalyses 1,2-di-(9Z-octadecenoyl)-sn-glycero-3-phosphocholine + 1-hexadecanoyl-sn-glycero-3-phosphocholine = 1-hexadecanoyl-2-(9Z-octadecenoyl)-sn-glycero-3-phosphocholine + 1-(9Z-octadecenoyl)-sn-glycero-3-phosphocholine. The protein operates within phospholipid metabolism. Its function is as follows. Acyltransferase required to remodel newly synthesized phospholipid cardiolipin (1',3'-bis-[1,2-diacyl-sn-glycero-3-phospho]-glycerol or CL), a key component of the mitochondrial inner membrane, with tissue specific acyl chains necessary for adequate mitochondrial function. Its role in cellular physiology is to improve mitochondrial performance. CL is critical for the coassembly of lipids and proteins in mitochondrial membranes, for instance, remodeling of the acyl groups of CL in the mitochondrial inner membrane affects the assembly and stability of respiratory chain complex IV and its supercomplex forms. Catalyzes the transacylation between phospholipids and lysophospholipids, with the highest rate being between phosphatidylcholine (1,2-diacyl-sn-glycero-3-phosphocholine or PC) and CL. Catalyzes both 1-acyl-sn-glycero-3-phosphocholine (lysophosphatidylcholine or LPC) reacylation and PC-CL transacylation, that means, it exchanges acyl groups between CL and PC by a combination of forward and reverse transacylations. Also catalyzes transacylations between other phospholipids such as phosphatidylethanolamine (1,2-diacyl-sn-glycero-3-phosphoethanolamine or PE) and CL, between PC and PE, and between PC and phosphatidate (1,2-diacyl-sn-glycero-3-phosphate or PA), although at lower rate. Not regiospecific, it transfers acyl groups into any of the sn-1 and sn-2 positions of the monolysocardiolipin (MLCL), which is an important prerequisite for uniformity and symmetry in CL acyl distribution. Cannot transacylate dilysocardiolipin (DLCL), thus, the role of MLCL is limited to that of an acyl acceptor. CoA-independent, it can reshuffle molecular species within a single phospholipid class. Redistributes fatty acids between MLCL, CL, and other lipids, which prolongs the half-life of CL. Its action is completely reversible, which allows for cyclic changes, such as fission and fusion or bending and flattening of the membrane. Hence, by contributing to the flexibility of the lipid composition, it plays an important role in the dynamics of mitochondria membranes. The protein is Taffazin (taz) of Dictyostelium discoideum (Social amoeba).